The chain runs to 267 residues: 4-hydroxy-2-oxo-heptane-1,7-dioate aldolase (267 aa).

His-45 serves as the catalytic Proton acceptor. Residue Gln-147 participates in substrate binding. Glu-149 is an a divalent metal cation binding site. Ala-174 and Asp-175 together coordinate substrate. An a divalent metal cation-binding site is contributed by Asp-175.

The protein belongs to the HpcH/HpaI aldolase family. Homohexamer; trimer of dimers. It depends on a divalent metal cation as a cofactor.

It catalyses the reaction 4-hydroxy-2-oxoheptanedioate = succinate semialdehyde + pyruvate. Its pathway is aromatic compound metabolism; 4-hydroxyphenylacetate degradation; pyruvate and succinate semialdehyde from 4-hydroxyphenylacetate: step 7/7. Catalyzes the reversible retro-aldol cleavage of 4-hydroxy-2-ketoheptane-1,7-dioate (HKHD) to pyruvate and succinic semialdehyde. The polypeptide is 4-hydroxy-2-oxo-heptane-1,7-dioate aldolase (Shigella flexneri).